The sequence spans 79 residues: Sec-independent protein translocase protein TatA (79 aa).

The helical transmembrane segment at 1 to 21 (MGSLSIWHWIVVIAVVLLLFG) threads the bilayer. Residues 43–60 (LQDDEKTAEKPDPVKSID) are compositionally biased toward basic and acidic residues. A disordered region spans residues 43-79 (LQDDEKTAEKPDPVKSIDHNAPTAAAPTRTDVGSKAV).

This sequence belongs to the TatA/E family. The Tat system comprises two distinct complexes: a TatABC complex, containing multiple copies of TatA, TatB and TatC subunits, and a separate TatA complex, containing only TatA subunits. Substrates initially bind to the TatABC complex, which probably triggers association of the separate TatA complex to form the active translocon.

The protein localises to the cell inner membrane. In terms of biological role, part of the twin-arginine translocation (Tat) system that transports large folded proteins containing a characteristic twin-arginine motif in their signal peptide across membranes. TatA could form the protein-conducting channel of the Tat system. The polypeptide is Sec-independent protein translocase protein TatA (Rhodopseudomonas palustris (strain BisB5)).